A 201-amino-acid chain; its full sequence is MSYYFNYIGKKLKPRKSVTFSTETKVYEYPREPELTAQEKQKLLEEEEESDFSGFFVIDLTDSDNEIKEEEESEEEEKEISHGAKSTIKSILTNYRNKHGRNRNPRSRSIFKNAQRGYRRREITKIAKEEARVYWEGSDLLDSPDSELPTLPRFDFTPSEMESKRTGFGFTFDEHEEALHGILPGGCTGNTETVDQGLSKQ.

Acidic residues predominate over residues 64-78 (DNEIKEEEESEEEEK). Disordered stretches follow at residues 64–114 (DNEI…FKNA) and 182–201 (ILPG…LSKQ). A compositionally biased stretch (basic residues) spans 96–106 (RNKHGRNRNPR). Polar residues predominate over residues 189-201 (GNTETVDQGLSKQ).

This is an uncharacterized protein from Ostreid herpesvirus 1 (isolate France) (OsHV-1).